The chain runs to 796 residues: Probable phosphoketolase (796 aa).

Belongs to the XFP family. Thiamine diphosphate serves as cofactor.

This Streptomyces coelicolor (strain ATCC BAA-471 / A3(2) / M145) protein is Probable phosphoketolase.